Reading from the N-terminus, the 739-residue chain is Probable beta-glucosidase L (739 aa).

Residues 1-17 (MQTLFLSLLAAAVTVHA) form the signal peptide. N40 and N224 each carry an N-linked (GlcNAc...) asparagine glycan. D252 is a catalytic residue. An N-linked (GlcNAc...) asparagine glycan is attached at N398.

This sequence belongs to the glycosyl hydrolase 3 family.

The protein resides in the secreted. It catalyses the reaction Hydrolysis of terminal, non-reducing beta-D-glucosyl residues with release of beta-D-glucose.. It participates in glycan metabolism; cellulose degradation. In terms of biological role, beta-glucosidases are one of a number of cellulolytic enzymes involved in the degradation of cellulosic biomass. Catalyzes the last step releasing glucose from the inhibitory cellobiose. The polypeptide is Probable beta-glucosidase L (bglL) (Aspergillus fumigatus (strain ATCC MYA-4609 / CBS 101355 / FGSC A1100 / Af293) (Neosartorya fumigata)).